Here is a 215-residue protein sequence, read N- to C-terminus: Cytochrome b6 (215 aa).

At 1 to 31 (MANVYDWFQERLEIQALADDVTSKYVPPHVN) the chain is on the cytoplasmic side. Residues 32 to 52 (IFYCLGGITLTCFLIQFATGF) traverse the membrane as a helical segment. C35 provides a ligand contact to heme c. The Lumenal, thylakoid segment spans residues 53 to 89 (AMTFYYKPTVTEAYASVQYIMNEVSFGWLIRSIHRWS). Residues R83, H86, H100, and R103 each contribute to the heme b site. The helical transmembrane segment at 90–110 (ASMMVLMMILHVFRVYLTGGF) threads the bilayer. Residues 111–115 (KKPRE) are Cytoplasmic-facing. The helical transmembrane segment at 116-136 (LTWISGVILAVITVSFGVTGY) threads the bilayer. Residues 137-185 (SLPWDQVGYWAVKIVSGVPEAIPVVGVLISDLLRGGSSVGQATLTRYYS) lie on the Lumenal, thylakoid side of the membrane. The chain crosses the membrane as a helical span at residues 186–206 (AHTFVLPWLIAVFMLLHFLMI). H187 and H202 together coordinate heme b. Residues 207 to 215 (RKQGISGPL) are Cytoplasmic-facing. K208 contributes to the heme c binding site.

It belongs to the cytochrome b family. PetB subfamily. The 4 large subunits of the cytochrome b6-f complex are cytochrome b6, subunit IV (17 kDa polypeptide, PetD), cytochrome f and the Rieske protein, while the 4 small subunits are PetG, PetL, PetM and PetN. The complex functions as a dimer. It depends on heme b as a cofactor. Heme c is required as a cofactor.

The protein resides in the cellular thylakoid membrane. Component of the cytochrome b6-f complex, which mediates electron transfer between photosystem II (PSII) and photosystem I (PSI), cyclic electron flow around PSI, and state transitions. The sequence is that of Cytochrome b6 from Mastigocladus laminosus (Fischerella sp.).